A 517-amino-acid polypeptide reads, in one-letter code: Beta-galactoside alpha-2,6-sialyltransferase 2 (517 aa).

The Cytoplasmic segment spans residues 1 to 10 (MKPNLKQWKQ). The chain crosses the membrane as a helical; Signal-anchor for type II membrane protein span at residues 11–31 (FMLFGICAWGLLFLVIFVYFT). The Lumenal segment spans residues 32 to 517 (DSNSVEPVPS…IHCPIKDHIT (486 aa)). 3 N-linked (GlcNAc...) asparagine glycosylation sites follow: N201, N298, and N328. 3 disulfides stabilise this stretch: C244–C510, C287–C439, and C457–C468.

It belongs to the glycosyltransferase 29 family.

It is found in the golgi apparatus. It localises to the golgi stack membrane. The enzyme catalyses a beta-D-galactoside + CMP-N-acetyl-beta-neuraminate = an N-acetyl-alpha-neuraminyl-(2-&gt;6)-beta-D-galactosyl derivative + CMP + H(+). Its function is as follows. Transfers sialic acid from the donor of substrate CMP-sialic acid to galactose containing acceptor substrates. The polypeptide is Beta-galactoside alpha-2,6-sialyltransferase 2 (st6gal2) (Xenopus tropicalis (Western clawed frog)).